A 712-amino-acid polypeptide reads, in one-letter code: Patatin-like phospholipase domain-containing protein NFIA_019760 (712 aa).

Basic and acidic residues predominate over residues 1-13; that stretch reads MTSDEKSATRDIY. The tract at residues 1–21 is disordered; it reads MTSDEKSATRDIYDPNTLPDY. The helical transmembrane segment at 85–105 threads the bilayer; that stretch reads WPFLFTVFAWITVLGFAYTLT. The region spanning 275-466 is the PNPLA domain; that stretch reads LCLSGGATFA…RTDIPIKALN (192 aa). The GXSXG signature appears at 306-310; that stretch reads GTSGG. Ser308 acts as the Nucleophile in catalysis. Asp453 acts as the Proton acceptor in catalysis. The interval 628–687 is disordered; it reads RRRQDRAEEHADRMVERLDQSFPERQSDYKDESHYTEVSDSLSATSSRPHTPDARRSSMF. 2 stretches are compositionally biased toward basic and acidic residues: residues 632-646 and 652-664; these read DRAE…ERLD and RQSD…HYTE. The segment covering 665–676 has biased composition (polar residues); it reads VSDSLSATSSRP. Residues 677–687 show a composition bias toward basic and acidic residues; that stretch reads HTPDARRSSMF.

The protein belongs to the PLPL family.

Its subcellular location is the membrane. Probable lipid hydrolase. This is Patatin-like phospholipase domain-containing protein NFIA_019760 from Neosartorya fischeri (strain ATCC 1020 / DSM 3700 / CBS 544.65 / FGSC A1164 / JCM 1740 / NRRL 181 / WB 181) (Aspergillus fischerianus).